The primary structure comprises 370 residues: Probable trehalose-phosphate phosphatase 6 (370 aa).

The protein belongs to the trehalose phosphatase family. A divalent metal cation serves as cofactor.

It catalyses the reaction alpha,alpha-trehalose 6-phosphate + H2O = alpha,alpha-trehalose + phosphate. The protein operates within glycan biosynthesis; trehalose biosynthesis. Functionally, removes the phosphate from trehalose 6-phosphate to produce free trehalose. Trehalose accumulation in plant may improve abiotic stress tolerance. The sequence is that of Probable trehalose-phosphate phosphatase 6 (TPP6) from Oryza sativa subsp. japonica (Rice).